The primary structure comprises 284 residues: 2-dehydro-3-deoxyphosphooctonate aldolase (284 aa).

It belongs to the KdsA family.

Its subcellular location is the cytoplasm. It carries out the reaction D-arabinose 5-phosphate + phosphoenolpyruvate + H2O = 3-deoxy-alpha-D-manno-2-octulosonate-8-phosphate + phosphate. It functions in the pathway carbohydrate biosynthesis; 3-deoxy-D-manno-octulosonate biosynthesis; 3-deoxy-D-manno-octulosonate from D-ribulose 5-phosphate: step 2/3. The protein operates within bacterial outer membrane biogenesis; lipopolysaccharide biosynthesis. This is 2-dehydro-3-deoxyphosphooctonate aldolase from Synechococcus sp. (strain ATCC 27144 / PCC 6301 / SAUG 1402/1) (Anacystis nidulans).